We begin with the raw amino-acid sequence, 64 residues long: Beta-defensin 1 (64 aa).

Positions M1–G20 are cleaved as a signal peptide. Residues L21–K23 constitute a propeptide that is removed on maturation. 3 disulfides stabilise this stretch: C31/C60, C38/C53, and C43/C61.

The protein belongs to the beta-defensin family. In terms of assembly, monomer. Homodimer.

Its subcellular location is the secreted. The protein localises to the membrane. Functionally, has bactericidal activity. May act as a ligand for C-C chemokine receptor CCR6. Positively regulates the sperm motility and bactericidal activity in a CCR6-dependent manner. Binds to CCR6 and triggers Ca2+ mobilization in the sperm which is important for its motility. In Sus scrofa (Pig), this protein is Beta-defensin 1 (DEFB1).